We begin with the raw amino-acid sequence, 179 residues long: Ribosome maturation factor RimP (179 aa).

Belongs to the RimP family.

The protein resides in the cytoplasm. Required for maturation of 30S ribosomal subunits. The protein is Ribosome maturation factor RimP of Chlorobium chlorochromatii (strain CaD3).